The primary structure comprises 458 residues: SLIT-ROBO Rho GTPase-activating protein 2B (458 aa).

The region spanning 22-324 is the F-BAR domain; sequence KEIRAQLTEQ…AVENLDATSD (303 aa). Positions 181-203 are enriched in basic and acidic residues; it reads LKEAEKQEEKQIGKSVKQEDRQT. Residues 181–214 form a disordered region; that stretch reads LKEAEKQEEKQIGKSVKQEDRQTPRSPDSTANVR. Residues 362 to 400 adopt a coiled-coil conformation; it reads QSELLQRCQQLQSRLSTLKIENEEVKKTMEATLQTIQDI.

May interact with SRGAP2; formation of the heterodimer alters SRGAP2 function.

May regulate cell migration and differentiation through interaction with and inhibition of SRGAP2. In contrast to SRGAP2C, it is not able to induce long-lasting changes in synaptic density throughout adulthood. The polypeptide is SLIT-ROBO Rho GTPase-activating protein 2B (SRGAP2B) (Homo sapiens (Human)).